Here is a 270-residue protein sequence, read N- to C-terminus: Hemin import ATP-binding protein HmuV (270 aa).

The region spanning 2–238 (LTVENIEVTL…VTLSQAYGCT (237 aa)) is the ABC transporter domain. 34-41 (GHNGSGKT) contributes to the ATP binding site.

It belongs to the ABC transporter superfamily. Heme (hemin) importer (TC 3.A.1.14.5) family. In terms of assembly, the complex is composed of two ATP-binding proteins (HmuV), two transmembrane proteins (HmuU) and a solute-binding protein (HmuT).

It is found in the cell inner membrane. Its function is as follows. Part of the ABC transporter complex HmuTUV involved in hemin import. Responsible for energy coupling to the transport system. This Jannaschia sp. (strain CCS1) protein is Hemin import ATP-binding protein HmuV.